Here is a 473-residue protein sequence, read N- to C-terminus: Rifampicin monooxygenase (473 aa).

The FAD site is built by threonine 12, glutamate 31, lysine 32, and arginine 41. Arginine 43 is a binding site for rifampicin. Glutamine 98, valine 122, and threonine 156 together coordinate FAD. Rifampicin is bound at residue arginine 196. Aspartate 276 serves as a coordination point for FAD. Glycine 285 provides a ligand contact to rifampicin. Leucine 289 and asparagine 290 together coordinate FAD.

The protein belongs to the rifampicin monooxygenase family. Homodimer. FAD is required as a cofactor.

It carries out the reaction rifampicin + NADPH + O2 = rifampicin para-naphthoquinone carboxamide + NADP(+) + H2O + H(+). The enzyme catalyses rifampicin + NADH + O2 = rifampicin para-naphthoquinone carboxamide + NAD(+) + H2O + H(+). Monooxygenase that can modify rifampicin, thereby inactivating its antibiotic activity. It constitutes a secondary rifampicin resistance factor. The polypeptide is Rifampicin monooxygenase (Nocardia farcinica (strain IFM 10152)).